The sequence spans 939 residues: Tyrosine-protein kinase Shark (939 aa).

The SH2 1 domain maps to 10–106 (WYHGNLSREA…GLPTKLTVPL (97 aa)). ANK repeat units follow at residues 153-185 (DGQT…SSDS), 186-218 (FGCQ…GRNI), and 220-252 (NGYV…PRTS). Residues 288–403 (WYHGTLTREE…GLPVSLKYPV (116 aa)) enclose the SH2 2 domain. Disordered stretches follow at residues 410 to 446 (EVPS…QHPH) and 476 to 505 (ALFD…SLAG). Residues 496-505 (ESSVSGSLAG) show a composition bias toward polar residues. One can recognise a Protein kinase domain in the interval 662-921 (LVLDREIGHG…PTFVYLTEFF (260 aa)). ATP contacts are provided by residues 668–676 (IGHGEFGSV) and lysine 698. The active-site Proton acceptor is aspartate 789. Residue tyrosine 927 is modified to Phosphotyrosine.

This sequence belongs to the protein kinase superfamily. Tyr protein kinase family. In terms of assembly, interacts with drpr; this is required for the recruitment of drpr and glial cells to severed axons and for the phagocytosis of axonal debris by glial cells following axon injury. In terms of tissue distribution, gastrulation embryos show expression in ectodermal cells along the cephalic furrow and ventral midline. Proctodeum, stomodeum and their derived structures (foregut, atrium, pharynx, esophagus and hindgut) continue to show expression from stage 8-9 to late embryos. Other ectodermally derived structures (frontal sac, salivary gland and labium) and developing tracheal system also show expression.

The protein localises to the cytoplasm. It catalyses the reaction L-tyrosyl-[protein] + ATP = O-phospho-L-tyrosyl-[protein] + ADP + H(+). Its function is as follows. Following axon injury, required for recruitment of drpr and glial cells to severed axons and for glial clearance of severed axons from the central nervous system. Together with Src42a and drpr, promotes the migration of macrophages to sites of wounding as part of a signaling cascade where Scr42a detects production of hydrogen peroxide at wound sites which triggers phosphorylation of drpr and subsequent recruitment and activation of shark. May be involved in signal transduction on the apical surface of ectodermal epithelial cells, regulating their polarity during invagination. Crumbs (crb) may be the intracellular signal. The chain is Tyrosine-protein kinase Shark from Drosophila melanogaster (Fruit fly).